The sequence spans 474 residues: Lactococcin A secretion protein LcnD (474 aa).

The Cytoplasmic portion of the chain corresponds to 1–21 (MFDKKLLESSELYDKRYRNFS). A helical transmembrane segment spans residues 22 to 44 (TLIILPLFILLVGGVIFTFFAHK). Topologically, residues 45–474 (ELTVISTGSI…LDKIMGRGNQ (430 aa)) are extracellular.

It belongs to the membrane fusion protein (MFP) (TC 8.A.1) family.

It localises to the cell membrane. Involved in the secretion of lactococcin A. This chain is Lactococcin A secretion protein LcnD (lcnD), found in Lactococcus lactis subsp. cremoris (Streptococcus cremoris).